Consider the following 54-residue polypeptide: Large ribosomal subunit protein bL33 (54 aa).

Belongs to the bacterial ribosomal protein bL33 family.

The protein is Large ribosomal subunit protein bL33 of Symbiobacterium thermophilum (strain DSM 24528 / JCM 14929 / IAM 14863 / T).